A 690-amino-acid polypeptide reads, in one-letter code: MSAPTTTKASASSSPPALRPLSSSLLLTIPTTNAQLVLPSVTVPAARRHNSTKSTNSTTSTNSTTATSKMPIERRAAEIEKRIAAIPLERYRNFCIVAHIDHGKSTLSDRLLEHTGTIVAGDGNKQVLDKLDVERERGITVKAQTCTMIYKHKEDGLDYLLHLVDTPGHVDFRAEVTRSYSSCSGALLLVDASQGVQAQTVANFYLAFAQGLSLVPVVNKIDMASADVPRVLEQLETVFELDTSTAVKVSAKTGQGVGEILPAVIKKMPAPVGDAKKPLRMLLVDSWYDTFKGVVLLVRLFDGTLKQGDKVYSYATGNEYIVGEVGIQYPDAVPQKVLRAGQVGYVFFNPGMKRIQDAKLGDTFTNVGYEDIVEPCPGFEEPKPMVFVAAFPTNQDDYGRLADSISHLVLNDRSVTLQKDYSEALGAGWRLGFLGSLHCSVFQDRLRQEHGASIIITEPAVPTKIVWSTGQEEIVTNPAEFPDPDDHRIRSATLYEPFVNATVTLPEEYVGRCIEICENARGVQKSLEFFTATQVILKYELPAASLVDDLFGKLKGATKGYATLDYEDAGWRQAQLVKLNLLVNKKAVDAVARIVHTSQVERLGRQWVTKFKEHVDRQMFEVIIQAAAGRRIVARETIKPFRKDVLAKLHASDITRRRKLLEKQKAGRKRLRAVGNVIIDQSAFQKFLSK.

The segment at 40–68 is disordered; the sequence is SVTVPAARRHNSTKSTNSTTSTNSTTATS. Over residues 52–68 the composition is skewed to low complexity; sequence TKSTNSTTSTNSTTATS. The tr-type G domain maps to 89 to 272; it reads ERYRNFCIVA…AVIKKMPAPV (184 aa). GTP contacts are provided by residues 98–105, 165–169, and 219–222; these read AHIDHGKS, DTPGH, and NKID.

It belongs to the TRAFAC class translation factor GTPase superfamily. Classic translation factor GTPase family. LepA subfamily.

It is found in the mitochondrion inner membrane. It catalyses the reaction GTP + H2O = GDP + phosphate + H(+). Functionally, promotes mitochondrial protein synthesis. May act as a fidelity factor of the translation reaction, by catalyzing a one-codon backward translocation of tRNAs on improperly translocated ribosomes. Binds to mitochondrial ribosomes in a GTP-dependent manner. This chain is Translation factor GUF1, mitochondrial, found in Sordaria macrospora (strain ATCC MYA-333 / DSM 997 / K(L3346) / K-hell).